Reading from the N-terminus, the 89-residue chain is Small ribosomal subunit protein bS20 (89 aa).

This sequence belongs to the bacterial ribosomal protein bS20 family.

Binds directly to 16S ribosomal RNA. This Helicobacter acinonychis (strain Sheeba) protein is Small ribosomal subunit protein bS20.